The primary structure comprises 101 residues: Small ribosomal subunit protein uS14 (101 aa).

This sequence belongs to the universal ribosomal protein uS14 family. As to quaternary structure, part of the 30S ribosomal subunit. Contacts proteins S3 and S10.

Binds 16S rRNA, required for the assembly of 30S particles and may also be responsible for determining the conformation of the 16S rRNA at the A site. The protein is Small ribosomal subunit protein uS14 of Ectopseudomonas mendocina (strain ymp) (Pseudomonas mendocina).